We begin with the raw amino-acid sequence, 277 residues long: Phosphate import ATP-binding protein PstB 2 (277 aa).

Residues 31–272 (IEVPGLSLFY…PAKKQTEDYI (242 aa)) enclose the ABC transporter domain. An ATP-binding site is contributed by 63–70 (GPSGCGKS).

The protein belongs to the ABC transporter superfamily. Phosphate importer (TC 3.A.1.7) family. In terms of assembly, the complex is composed of two ATP-binding proteins (PstB), two transmembrane proteins (PstC and PstA) and a solute-binding protein (PstS).

Its subcellular location is the cell inner membrane. It catalyses the reaction phosphate(out) + ATP + H2O = ADP + 2 phosphate(in) + H(+). Its function is as follows. Part of the ABC transporter complex PstSACB involved in phosphate import. Responsible for energy coupling to the transport system. This Pseudomonas putida (strain ATCC 47054 / DSM 6125 / CFBP 8728 / NCIMB 11950 / KT2440) protein is Phosphate import ATP-binding protein PstB 2.